A 508-amino-acid polypeptide reads, in one-letter code: Probable polyol transporter 3 (508 aa).

The next 12 membrane-spanning stretches (helical) occupy residues 21-41, 60-80, 90-110, 120-140, 147-167, 178-198, 280-300, 318-338, 348-368, 384-404, 418-438, and 448-468; these read FAFG…YDTG, QIEV…LTAG, YTIA…GYGP, CIAG…SAEI, GFLT…GYVS, LGWR…AFGI, ILIA…EAVV, LLLA…IATF, LLLT…VSLT, IVST…ITWV, GASI…MSFL, and GVFF…FFML.

Belongs to the major facilitator superfamily. Sugar transporter (TC 2.A.1.1) family.

It is found in the membrane. Plasma membrane sugar-proton symporter. The protein is Probable polyol transporter 3 (PLT3) of Arabidopsis thaliana (Mouse-ear cress).